Consider the following 92-residue polypeptide: Putative defensin-like protein 251 (92 aa).

The N-terminal stretch at 1–27 is a signal peptide; that stretch reads MRCVTSFVVFCILMFFVLNIFTVEVKA. Disulfide bonds link cysteine 34/cysteine 90, cysteine 45/cysteine 69, cysteine 53/cysteine 82, and cysteine 67/cysteine 84.

Belongs to the DEFL family.

The protein localises to the secreted. This is Putative defensin-like protein 251 (SCRL12) from Arabidopsis thaliana (Mouse-ear cress).